The primary structure comprises 207 residues: Imidazole glycerol phosphate synthase subunit HisH (207 aa).

The Glutamine amidotransferase type-1 domain occupies 1–206; sequence MMIVIGYDAG…KEYVYENTAR (206 aa). Cysteine 79 acts as the Nucleophile in catalysis. Active-site residues include histidine 181 and glutamate 183.

Heterodimer of HisH and HisF.

The protein resides in the cytoplasm. It catalyses the reaction 5-[(5-phospho-1-deoxy-D-ribulos-1-ylimino)methylamino]-1-(5-phospho-beta-D-ribosyl)imidazole-4-carboxamide + L-glutamine = D-erythro-1-(imidazol-4-yl)glycerol 3-phosphate + 5-amino-1-(5-phospho-beta-D-ribosyl)imidazole-4-carboxamide + L-glutamate + H(+). The enzyme catalyses L-glutamine + H2O = L-glutamate + NH4(+). It functions in the pathway amino-acid biosynthesis; L-histidine biosynthesis; L-histidine from 5-phospho-alpha-D-ribose 1-diphosphate: step 5/9. In terms of biological role, IGPS catalyzes the conversion of PRFAR and glutamine to IGP, AICAR and glutamate. The HisH subunit catalyzes the hydrolysis of glutamine to glutamate and ammonia as part of the synthesis of IGP and AICAR. The resulting ammonia molecule is channeled to the active site of HisF. In Streptococcus gordonii (strain Challis / ATCC 35105 / BCRC 15272 / CH1 / DL1 / V288), this protein is Imidazole glycerol phosphate synthase subunit HisH.